Consider the following 85-residue polypeptide: UPF0473 protein CLK_1946 (85 aa).

It belongs to the UPF0473 family.

The chain is UPF0473 protein CLK_1946 from Clostridium botulinum (strain Loch Maree / Type A3).